Consider the following 239-residue polypeptide: Ribosomal RNA small subunit methyltransferase G (239 aa).

Residues G78, F83, 129 to 130 (AE), and R148 contribute to the S-adenosyl-L-methionine site.

It belongs to the methyltransferase superfamily. RNA methyltransferase RsmG family.

The protein localises to the cytoplasm. Its function is as follows. Specifically methylates the N7 position of a guanine in 16S rRNA. In Clostridium beijerinckii (strain ATCC 51743 / NCIMB 8052) (Clostridium acetobutylicum), this protein is Ribosomal RNA small subunit methyltransferase G.